A 282-amino-acid chain; its full sequence is MDGKAVAAAVKERVKMAVAELKSGGTDPCLATVLVGDDPASGTYVRNKHAACAEVGITTQDHRLGPSTTEGDLLKLIAELNSDRSVHGILVQMPLPEGIREIKVVSAISPLKDVDGLTPLNAGLLTAGTATLIPCTPLGIMEMLDYYNIELEGKEVVLINRSRLVGIPLHHLFLGRNATVTTCHSRTKDIGSISRRADVIVTAVGNRDKFVLTPDMVKEGAVVIDVAISRSDRGLTGDADYAAVSEKASHITPVPGGVGPMTVAMLLKNTTTAASLVKSLER.

NADP(+) contacts are provided by residues 160–162, Ser185, and Ile228; that span reads NRS.

It belongs to the tetrahydrofolate dehydrogenase/cyclohydrolase family. Homodimer.

The catalysed reaction is (6R)-5,10-methylene-5,6,7,8-tetrahydrofolate + NADP(+) = (6R)-5,10-methenyltetrahydrofolate + NADPH. The enzyme catalyses (6R)-5,10-methenyltetrahydrofolate + H2O = (6R)-10-formyltetrahydrofolate + H(+). It functions in the pathway one-carbon metabolism; tetrahydrofolate interconversion. Functionally, catalyzes the oxidation of 5,10-methylenetetrahydrofolate to 5,10-methenyltetrahydrofolate and then the hydrolysis of 5,10-methenyltetrahydrofolate to 10-formyltetrahydrofolate. The protein is Bifunctional protein FolD of Cenarchaeum symbiosum (strain A).